Here is a 489-residue protein sequence, read N- to C-terminus: Protein LMBR1L (489 aa).

Topologically, residues 1–21 are extracellular; sequence MEAPDCEVLSVREQLFHERIR. Residues 1–59 form an interaction with LGB region; sequence MEAPDCEVLSVREQLFHERIRECIISTLLFATLYILCHIFLTRFKKPAEFTTVDDADAT. The interval 1–76 is LCN1-binding; that stretch reads MEAPDCEVLS…LCTFTLAIAL (76 aa). The chain crosses the membrane as a helical span at residues 22 to 42; the sequence is ECIISTLLFATLYILCHIFLT. The Cytoplasmic segment spans residues 43–66; that stretch reads RFKKPAEFTTVDDADATVNKIALE. The helical transmembrane segment at 67-87 threads the bilayer; sequence LCTFTLAIALGAVLLLPFSII. At 88 to 114 the chain is on the extracellular side; sequence SNEVLLSLPRNYYIQWLNGSLIHGLWN. Residues 115–135 traverse the membrane as a helical segment; it reads LVFLFSNLSLIFLMPFAYFFT. The Cytoplasmic portion of the chain corresponds to 136-154; it reads ESEGFAGSRKGVLGRVYET. A helical membrane pass occupies residues 155-175; sequence VVMLMLLTLLVLGMVWVASAI. At 176–196 the chain is on the extracellular side; that stretch reads VDNNKASRESLYDFWEYYLPY. A helical transmembrane segment spans residues 197 to 217; the sequence is LYSCISFLGVLLLLVCTPLGL. The Cytoplasmic segment spans residues 218 to 305; sequence ARMFSVTGKL…NLGYPLAMLC (88 aa). Residues 306 to 326 traverse the membrane as a helical segment; sequence LLVLTGLSVLIVAIHILELLI. The Extracellular portion of the chain corresponds to 327-350; that stretch reads DEAAMPRGMQGASLGQVSFSKLGS. Residues 351–371 form a helical membrane-spanning segment; that stretch reads FGAVVQVVLIFYLMVSSVVGF. At 372–388 the chain is on the cytoplasmic side; the sequence is YSSPLFRSLRPRWHDTA. The chain crosses the membrane as a helical span at residues 389 to 409; the sequence is MTQIIGNCVCLLVLSSALPVF. At 410–431 the chain is on the extracellular side; that stretch reads SRTLGLTRFDLLGDFGRFNWLG. A helical membrane pass occupies residues 432 to 452; it reads NFYIVFLYNAAFAGLTTLCLV. Topologically, residues 453-489 are cytoplasmic; the sequence is KTFTAAVRAELIRAFGLDRLPLPVSGFPRASRKTQHQ.

Belongs to the LIMR family. As to quaternary structure, dimer. Can also form higher oligomers. Interacts with LCN1; this interaction mediates the endocytosis of LCN1. Interacts with UBAC2, FAF2, VCP, AMFR, ZNRF3, CTNNB1, LRP6, GSK3A, GSK3B, FZD6, DVL2 and RNF43. Interaction with LGB and SCGB1A1 is controversial.

Its subcellular location is the cell membrane. It is found in the endoplasmic reticulum membrane. Its function is as follows. Plays an essential role in lymphocyte development by negatively regulating the canonical Wnt signaling pathway. In association with UBAC2 and E3 ubiquitin-protein ligase AMFR, promotes the ubiquitin-mediated degradation of CTNNB1 and Wnt receptors FZD6 and LRP6. LMBR1L stabilizes the beta-catenin destruction complex that is required for regulating CTNNB1 levels. Acts as a LCN1 receptor and can mediate its endocytosis. This is Protein LMBR1L (LMBR1L) from Macaca fascicularis (Crab-eating macaque).